Consider the following 202-residue polypeptide: Glycerol-3-phosphate acyltransferase (202 aa).

The next 5 membrane-spanning stretches (helical) occupy residues 3 to 23, 51 to 71, 74 to 94, 116 to 136, and 140 to 160; these read ILLA…VVVS, KAAI…VWLV, FGIG…LGHL, AVHP…AFFF, and SLAA…LFGT.

It belongs to the PlsY family. In terms of assembly, probably interacts with PlsX.

Its subcellular location is the cell inner membrane. The enzyme catalyses an acyl phosphate + sn-glycerol 3-phosphate = a 1-acyl-sn-glycero-3-phosphate + phosphate. The protein operates within lipid metabolism; phospholipid metabolism. Functionally, catalyzes the transfer of an acyl group from acyl-phosphate (acyl-PO(4)) to glycerol-3-phosphate (G3P) to form lysophosphatidic acid (LPA). This enzyme utilizes acyl-phosphate as fatty acyl donor, but not acyl-CoA or acyl-ACP. In Burkholderia thailandensis (strain ATCC 700388 / DSM 13276 / CCUG 48851 / CIP 106301 / E264), this protein is Glycerol-3-phosphate acyltransferase.